A 253-amino-acid chain; its full sequence is Zinc finger protein JAGGED (253 aa).

The tract at residues 1–46 (MRHEENYLDLNNLPDDFSKDGNKQALEEGSSSGQRKKKGSKEGKDE) is disordered. The span at 16-26 (DFSKDGNKQAL) shows a compositional bias: basic and acidic residues. The C2H2-type zinc finger occupies 51 to 73 (YECRFCSLKFCKSQALGGHMNRH).

Interacts with GATA18/HAN. In terms of tissue distribution, expressed in the emerging leaf, sepal, petal, stamen and carpel primordia. Not expressed in the apical shoot meristem (SAM).

The protein localises to the nucleus. Its function is as follows. Controls the morphogenesis of lateral organs. Functions in lateral organ shape and is sufficient to induce proliferation and growth of lateral organ tissue. Is necessary and sufficient for bract formation, but its expression is excluded from the cryptic bract, which could be a cause of bractless flowers in Arabidopsis. Participates with FIL and YAB3 in regulating valve margin development. Functions with JGL to define stamen and carpel shape. Functions with AS1 and AS2 in the sepal and petal primordia to repress boundary-specifying genes for normal development of the organs. This chain is Zinc finger protein JAGGED (JAG), found in Arabidopsis thaliana (Mouse-ear cress).